Consider the following 302-residue polypeptide: uncharacterized protein (302 aa).

9 helical membrane-spanning segments follow: residues 10–30, 65–85, 102–122, 130–150, 162–182, 190–210, 224–244, 251–271, and 282–302; these read VLSV…GVLG, LVLI…IAYL, VAAA…GIFG, IFYD…LSHI, AVFF…LWGL, ILGY…GLTL, LVSG…SYVL, FSVT…VLAI, and SCIF…SVVL.

Belongs to the auxin efflux carrier (TC 2.A.69) family.

Its subcellular location is the cell membrane. This is an uncharacterized protein from Methanothermobacter thermautotrophicus (strain ATCC 29096 / DSM 1053 / JCM 10044 / NBRC 100330 / Delta H) (Methanobacterium thermoautotrophicum).